We begin with the raw amino-acid sequence, 272 residues long: Phosphatidylglycerol--prolipoprotein diacylglyceryl transferase (272 aa).

The next 3 membrane-spanning stretches (helical) occupy residues 19-39 (ISIR…YFLV), 58-78 (LNTV…VVFY), and 94-114 (WHGG…GLIF). Arg-141 serves as a coordination point for a 1,2-diacyl-sn-glycero-3-phospho-(1'-sn-glycerol). The next 2 membrane-spanning stretches (helical) occupy residues 207–227 (GTIL…IENF) and 234–254 (LGFI…MILC).

Belongs to the Lgt family.

It localises to the cell inner membrane. It catalyses the reaction L-cysteinyl-[prolipoprotein] + a 1,2-diacyl-sn-glycero-3-phospho-(1'-sn-glycerol) = an S-1,2-diacyl-sn-glyceryl-L-cysteinyl-[prolipoprotein] + sn-glycerol 1-phosphate + H(+). It functions in the pathway protein modification; lipoprotein biosynthesis (diacylglyceryl transfer). Its function is as follows. Catalyzes the transfer of the diacylglyceryl group from phosphatidylglycerol to the sulfhydryl group of the N-terminal cysteine of a prolipoprotein, the first step in the formation of mature lipoproteins. In Desulfotalea psychrophila (strain LSv54 / DSM 12343), this protein is Phosphatidylglycerol--prolipoprotein diacylglyceryl transferase.